A 652-amino-acid polypeptide reads, in one-letter code: Phosphomethylpyrimidine synthase (652 aa).

Disordered regions lie at residues 1–45 and 118–166; these read MVSR…SVSA and QRGD…LDGR. Over residues 8–45 the composition is skewed to low complexity; the sequence is SSSSTSKAVTSSPSTSSLSSAASSPSVSSSSSSSSVSA. The segment covering 134–162 has biased composition (gly residues); that stretch reads GASGPGTLGSGTPGSGTPGSGPLGLGGTD. Residues Asn-245, Met-274, Tyr-303, His-339, 359–361, 400–403, and Glu-439 contribute to the substrate site; these read SRG and DGLR. Residue His-443 participates in Zn(2+) binding. Residue Tyr-466 coordinates substrate. His-507 is a Zn(2+) binding site. [4Fe-4S] cluster is bound by residues Cys-587, Cys-590, and Cys-595.

Belongs to the ThiC family. Requires [4Fe-4S] cluster as cofactor.

It carries out the reaction 5-amino-1-(5-phospho-beta-D-ribosyl)imidazole + S-adenosyl-L-methionine = 4-amino-2-methyl-5-(phosphooxymethyl)pyrimidine + CO + 5'-deoxyadenosine + formate + L-methionine + 3 H(+). The protein operates within cofactor biosynthesis; thiamine diphosphate biosynthesis. Its function is as follows. Catalyzes the synthesis of the hydroxymethylpyrimidine phosphate (HMP-P) moiety of thiamine from aminoimidazole ribotide (AIR) in a radical S-adenosyl-L-methionine (SAM)-dependent reaction. The protein is Phosphomethylpyrimidine synthase of Frankia casuarinae (strain DSM 45818 / CECT 9043 / HFP020203 / CcI3).